The following is a 408-amino-acid chain: Succinylornithine transaminase (408 aa).

N6-(pyridoxal phosphate)lysine is present on Lys-252.

It belongs to the class-III pyridoxal-phosphate-dependent aminotransferase family. AstC subfamily. Requires pyridoxal 5'-phosphate as cofactor.

It carries out the reaction N(2)-succinyl-L-ornithine + 2-oxoglutarate = N-succinyl-L-glutamate 5-semialdehyde + L-glutamate. It participates in amino-acid degradation; L-arginine degradation via AST pathway; L-glutamate and succinate from L-arginine: step 3/5. Catalyzes the transamination of N(2)-succinylornithine and alpha-ketoglutarate into N(2)-succinylglutamate semialdehyde and glutamate. Can also act as an acetylornithine aminotransferase. This Salmonella typhi protein is Succinylornithine transaminase.